A 195-amino-acid chain; its full sequence is Coiled-coil domain-containing protein 184 (195 aa).

Positions 39-68 form a coiled coil; it reads GMKELMEHLKAQLQALFEDVRAMRGALDEQ. A disordered region spans residues 98-175; that stretch reads RQGGLGVVGN…AGLLGGDGPL (78 aa). The segment covering 135-146 has biased composition (acidic residues); it reads PEDEEDDDEEEK.

The protein is Coiled-coil domain-containing protein 184 (CCDC184) of Bos taurus (Bovine).